Consider the following 124-residue polypeptide: U13-hexatoxin-Mg1a (124 aa).

An N-terminal signal peptide occupies residues 1–17 (MKLSALVFVASVMLVAA). Residues 18–52 (SPVKDVEEPVETHLAADLKTIEELAKYEEAAVQKR) constitute a propeptide that is removed on maturation. Intrachain disulfides connect C54–C72, C65–C78, C69–C116, and C71–C87.

As to expression, expressed by the venom gland.

It localises to the secreted. No toxicity is observed upon intracranial injection into mice and intrathorax injection into crickets. The sequence is that of U13-hexatoxin-Mg1a from Macrothele gigas (Japanese funnel web spider).